A 342-amino-acid polypeptide reads, in one-letter code: Large ribosomal subunit protein uL3 (342 aa).

Residues 1-22 (MGHRKLSSPRRGSAGLRPRKRA) are disordered.

Belongs to the universal ribosomal protein uL3 family. As to quaternary structure, part of the 50S ribosomal subunit. Forms a cluster with proteins L14 and L24e.

Functionally, one of the primary rRNA binding proteins, it binds directly near the 3'-end of the 23S rRNA, where it nucleates assembly of the 50S subunit. The chain is Large ribosomal subunit protein uL3 from Sulfolobus acidocaldarius (strain ATCC 33909 / DSM 639 / JCM 8929 / NBRC 15157 / NCIMB 11770).